We begin with the raw amino-acid sequence, 690 residues long: Beta-galactosidase (690 aa).

Substrate is bound at residue Asn173. Glu174 serves as the catalytic Proton donor. Residue Trp345 coordinates substrate.

It belongs to the glycosyl hydrolase 42 family.

It carries out the reaction Hydrolysis of terminal non-reducing beta-D-galactose residues in beta-D-galactosides.. Activity stimulated by beta-mercaptoethanol. Highly specific towards beta-D-galactoside substrates. Hydrolyzes 5-bromo-4-chloro-3-indolyl-beta-D-galactopyranoside (X-Gal) and o-nitrophenyl-beta-D-galactopyranoside (ONPG). Has activity against p-nitrophenyl(pNP)-beta-D-galactoside, but not significantly at all towards pNP-alpha-D-galactoside, pNP-beta-D-glucoside, pNP-beta-D-mannoside, pNP-beta-L-fucoside, pNP-beta-D-xyloside, pNP-beta-L-arabinoside, pNP-beta-D-galuronide, pNP-beta-D-glucuronide, pNP-beta-D-lactoside or pNP-beta-D-cellobioside. The polypeptide is Beta-galactosidase (Arthrobacter sp).